A 177-amino-acid chain; its full sequence is N-acetylmuramoyl-L-alanine amidase A (177 aa).

The N-acetylmuramoyl-L-alanine amidase domain maps to 23-158; that stretch reads QTSAVIMHTM…SGNENRYDPG (136 aa). An intrachain disulfide couples Cys114 to Cys121.

It localises to the secreted. It carries out the reaction Hydrolyzes the link between N-acetylmuramoyl residues and L-amino acid residues in certain cell-wall glycopeptides.. Its function is as follows. Antibacterial activity against Gram-positive bacteria M.luteus, S.aureus, E.faecalis and P.acidilactici and Gram-negative bacterium E.coli. The sequence is that of N-acetylmuramoyl-L-alanine amidase A (cwhA) from Achromobacter lyticus.